The following is a 250-amino-acid chain: 3-deoxy-manno-octulosonate cytidylyltransferase (250 aa).

The protein belongs to the KdsB family.

It is found in the cytoplasm. It carries out the reaction 3-deoxy-alpha-D-manno-oct-2-ulosonate + CTP = CMP-3-deoxy-beta-D-manno-octulosonate + diphosphate. It participates in nucleotide-sugar biosynthesis; CMP-3-deoxy-D-manno-octulosonate biosynthesis; CMP-3-deoxy-D-manno-octulosonate from 3-deoxy-D-manno-octulosonate and CTP: step 1/1. The protein operates within bacterial outer membrane biogenesis; lipopolysaccharide biosynthesis. Its function is as follows. Activates KDO (a required 8-carbon sugar) for incorporation into bacterial lipopolysaccharide in Gram-negative bacteria. The protein is 3-deoxy-manno-octulosonate cytidylyltransferase of Cytophaga hutchinsonii (strain ATCC 33406 / DSM 1761 / CIP 103989 / NBRC 15051 / NCIMB 9469 / D465).